A 245-amino-acid chain; its full sequence is NADH-quinone oxidoreductase subunit C (245 aa).

Basic and acidic residues predominate over residues 1-10 (MNAPQDRTDD). Disordered stretches follow at residues 1–54 (MNAP…GYGG) and 217–245 (QRKD…RSYQ). Low complexity predominate over residues 11–28 (GGVPVPVTPAGATGGAPA). Positions 39 to 54 (GMFGDQGTGDVSGYGG) are enriched in gly residues.

The protein belongs to the complex I 30 kDa subunit family. NDH-1 is composed of 14 different subunits. Subunits NuoB, C, D, E, F, and G constitute the peripheral sector of the complex.

Its subcellular location is the cell membrane. The catalysed reaction is a quinone + NADH + 5 H(+)(in) = a quinol + NAD(+) + 4 H(+)(out). NDH-1 shuttles electrons from NADH, via FMN and iron-sulfur (Fe-S) centers, to quinones in the respiratory chain. The immediate electron acceptor for the enzyme in this species is believed to be a menaquinone. Couples the redox reaction to proton translocation (for every two electrons transferred, four hydrogen ions are translocated across the cytoplasmic membrane), and thus conserves the redox energy in a proton gradient. This chain is NADH-quinone oxidoreductase subunit C, found in Salinispora arenicola (strain CNS-205).